We begin with the raw amino-acid sequence, 641 residues long: Chaperone protein DnaK (641 aa).

A Phosphothreonine; by autocatalysis modification is found at threonine 200. Low complexity predominate over residues 605-623; that stretch reads AAEQGGSADAASGNAQASK. Residues 605-628 form a disordered region; sequence AAEQGGSADAASGNAQASKAADDV.

This sequence belongs to the heat shock protein 70 family.

In terms of biological role, acts as a chaperone. The polypeptide is Chaperone protein DnaK (Xanthomonas oryzae pv. oryzae (strain KACC10331 / KXO85)).